A 384-amino-acid chain; its full sequence is Adaptive-response sensory kinase SasA (384 aa).

Residues 162 to 384 (MLAHDLRSPL…SFHFTLPVYR (223 aa)) form the Histidine kinase domain. Residue His-165 is modified to Phosphohistidine; by autocatalysis.

In terms of assembly, homooligomerizes. Interacts with KaiC. Participates in the KaiABC clock complex, whose core is composed of a KaiC homohexamer, 6 KaiB and up to 6 KaiA dimers. SasA and KaiB(fs) compete to bind to KaiC.

The enzyme catalyses ATP + protein L-histidine = ADP + protein N-phospho-L-histidine.. Member of the two-component regulatory system SasA/RpaA involved in genome-wide circadian gene expression. One of several clock output pathways. Participates in the Kai clock protein complex, the main circadian regulator in cyanobacteria, via its interaction with KaiC. KaiC enhances the autophosphorylation activity of SasA, which then transfers its phosphate group to RpaA to activate it. In addition to its output function, recruits fold-shifted KaiB (KaiB(fs)) to KaiC to cooperatively form the KaiB(6):KaiC(6) complex (independent of SasA kinase activity). Required for robustness of the circadian rhythm of gene expression and is involved in clock output, also required for adaptation to light/dark cycles. The protein is Adaptive-response sensory kinase SasA of Microcystis aeruginosa (strain NIES-843 / IAM M-2473).